Reading from the N-terminus, the 420-residue chain is RING finger protein 39 (420 aa).

Residues 88–135 (CPLCGGSFEDPVLLACEHSFCRACLARRWGTPPATDTEASPTACPCCG) form an RING-type zinc finger. Disordered regions lie at residues 166 to 186 (PGAR…CLDP) and 246 to 265 (DRRS…DGPK). The B30.2/SPRY domain occupies 210–420 (DDLPEDYPVV…APLRIVPAES (211 aa)).

It is found in the cytoplasm. The catalysed reaction is S-ubiquitinyl-[E2 ubiquitin-conjugating enzyme]-L-cysteine + [acceptor protein]-L-lysine = [E2 ubiquitin-conjugating enzyme]-L-cysteine + N(6)-ubiquitinyl-[acceptor protein]-L-lysine.. It participates in protein modification; protein ubiquitination. Plays an inhibitory role in anti-RNA viral innate immunity by targeting the adapter DDX3X and promoting its 'Lys-48'-linked polyubiquitination. Alternatively, enhances the cGAS-STING pathway activation by promoting 'Lys-63'-linked ubiquitination of STING1, facilitating the STING1-TBK1 complex formation and STING1 activation. This Macaca mulatta (Rhesus macaque) protein is RING finger protein 39 (RNF39).